The chain runs to 351 residues: Porphobilinogen deaminase (351 aa).

Cys-242 is modified (S-(dipyrrolylmethanemethyl)cysteine). In terms of domain architecture, RPE1 insert spans 257–306 (PRHLSKLAYREVLEGNTEALATAAYKSNRTDASTGLTYKLPLEVEFGKVS).

It belongs to the HMBS family. Monomer. Dipyrromethane serves as cofactor.

It carries out the reaction 4 porphobilinogen + H2O = hydroxymethylbilane + 4 NH4(+). Its pathway is porphyrin-containing compound metabolism; protoporphyrin-IX biosynthesis; coproporphyrinogen-III from 5-aminolevulinate: step 2/4. Functionally, tetrapolymerization of the monopyrrole PBG into the hydroxymethylbilane pre-uroporphyrinogen in several discrete steps. The sequence is that of Porphobilinogen deaminase from Rickettsia conorii (strain ATCC VR-613 / Malish 7).